The sequence spans 149 residues: UPF0179 protein MM_0589 (149 aa).

It belongs to the UPF0179 family.

This chain is UPF0179 protein MM_0589, found in Methanosarcina mazei (strain ATCC BAA-159 / DSM 3647 / Goe1 / Go1 / JCM 11833 / OCM 88) (Methanosarcina frisia).